Here is a 194-residue protein sequence, read N- to C-terminus: Probable GTP-binding protein EngB (194 aa).

In terms of domain architecture, EngB-type G spans 23–194; the sequence is DKMEFAFVGR…LNFMEEKLNN (172 aa). GTP-binding positions include 31–38, 58–62, 76–79, 142–145, and 173–175; these read GRSNVGKS, GRTQL, DLPG, TKID, and HSS. Mg(2+)-binding residues include Ser38 and Thr60.

It belongs to the TRAFAC class TrmE-Era-EngA-EngB-Septin-like GTPase superfamily. EngB GTPase family. Mg(2+) serves as cofactor.

Its function is as follows. Necessary for normal cell division and for the maintenance of normal septation. The protein is Probable GTP-binding protein EngB of Fusobacterium nucleatum subsp. nucleatum (strain ATCC 25586 / DSM 15643 / BCRC 10681 / CIP 101130 / JCM 8532 / KCTC 2640 / LMG 13131 / VPI 4355).